Consider the following 222-residue polypeptide: NADH dehydrogenase [ubiquinone] iron-sulfur protein 8-B, mitochondrial (222 aa).

4Fe-4S ferredoxin-type domains follow at residues 114–143 (RRYP…IEAE) and 153–182 (TRYD…EGPN). [4Fe-4S] cluster contacts are provided by Cys123, Cys126, Cys129, Cys133, Cys162, Cys165, Cys168, and Cys172.

It belongs to the complex I 23 kDa subunit family. As to quaternary structure, complex I is composed of at least 49 different subunits. This is a component of the iron-sulfur (IP) fragment of the enzyme. The cofactor is [4Fe-4S] cluster.

The protein localises to the mitochondrion. The enzyme catalyses a ubiquinone + NADH + 5 H(+)(in) = a ubiquinol + NAD(+) + 4 H(+)(out). Its function is as follows. Core subunit of the mitochondrial membrane respiratory chain NADH dehydrogenase (Complex I) that is believed to belong to the minimal assembly required for catalysis. Complex I functions in the transfer of electrons from NADH to the respiratory chain. The immediate electron acceptor for the enzyme is believed to be ubiquinone. May donate electrons to ubiquinone. The sequence is that of NADH dehydrogenase [ubiquinone] iron-sulfur protein 8-B, mitochondrial from Arabidopsis thaliana (Mouse-ear cress).